Consider the following 188-residue polypeptide: Vascular endothelial growth factor A-A (188 aa).

An N-terminal signal peptide occupies residues 1–23; the sequence is MNLVVYLIQLFLAALLHLSAVKA. Cystine bridges form between cysteine 49-cysteine 91, cysteine 80-cysteine 125, and cysteine 84-cysteine 127. The N-linked (GlcNAc...) asparagine glycan is linked to asparagine 98.

This sequence belongs to the PDGF/VEGF growth factor family. As to quaternary structure, homodimer; disulfide-linked. Isoform VEGF165 binds kdr and kdrl. Predominantly expressed in regions associated with active vascularization. From 15-16 hours post-fertilization (hpf), expressed in the anterior forebrain, the mesoderm underlying and lateral to the anterior hindbrain, the mesoderm underlying and lateral to the posterior hindbrain, and in the ventral medial portions of the somites. By 30-36 hpf, expression in the somites is decreased, while strong expression is observed in the region of the developing glomeruli and in the anterior portion of the pronephric ducts, the pharyngeal arches, and the brain. By 72 hpf, expression remains only in the pronephros region.

It localises to the secreted. Functionally, growth factor active in angiogenesis, vasculogenesis and endothelial cell growth. Induces endothelial cell proliferation, promotes cell migration, inhibits apoptosis, and induces permeabilization of blood vessels. Required for intersegmental vessel development in the tail during embryogenesis. Acts both upstream of kdr and tie1 to stimulate endothelial cell differentiation, and upstream of gata1 to stimulate hematopoietic cell differentiation. In Danio rerio (Zebrafish), this protein is Vascular endothelial growth factor A-A (vegfaa).